The following is a 539-amino-acid chain: Gamma-2-syntrophin (539 aa).

One can recognise a PDZ domain in the interval 73-156 (TVTLRRQPVG…EVTITVEYLR (84 aa)). 2 stretches are compositionally biased toward low complexity: residues 168–183 (SPGP…SSPL) and 194–205 (SSTTAPSSPSSP). Positions 168 to 209 (SPGPSSDHSSGASSPLFDSGLHLNGNSSTTAPSSPSSPIAKD) are disordered. The 126-residue stretch at 296–421 (QVVHMGWVNE…WEKSFQRATF (126 aa)) folds into the PH domain.

The protein belongs to the syntrophin family. As to quaternary structure, interacts with the dystrophin protein DMD and related proteins DTNA and DTNB. As to expression, widely expressed. Strong expression in brain and testis. In CNS, it is expressed in the perikaryon and proximal portion of the neuronal processes. Strong expression in the hippocampus, neuron-rich dendate granule cells, and pyramidal cell layers. Highly expressed in neurons of the cerebral cortex. Also expressed in the cerebellar cortex, deep cerebellar nuclei, thalamus, and basal ganglia.

The protein localises to the cell membrane. Its subcellular location is the sarcolemma. The protein resides in the cytoplasm. It is found in the cytoskeleton. Adapter protein that binds to and probably organizes the subcellular localization of a variety of proteins. May link various receptors to the actin cytoskeleton and the dystrophin glycoprotein complex. The protein is Gamma-2-syntrophin (SNTG2) of Homo sapiens (Human).